The primary structure comprises 319 residues: Acetyl-coenzyme A carboxylase carboxyl transferase subunit alpha (319 aa).

Positions Leu-43–Glu-296 constitute a CoA carboxyltransferase C-terminal domain.

Belongs to the AccA family. As to quaternary structure, acetyl-CoA carboxylase is a heterohexamer composed of biotin carboxyl carrier protein (AccB), biotin carboxylase (AccC) and two subunits each of ACCase subunit alpha (AccA) and ACCase subunit beta (AccD).

It localises to the cytoplasm. It catalyses the reaction N(6)-carboxybiotinyl-L-lysyl-[protein] + acetyl-CoA = N(6)-biotinyl-L-lysyl-[protein] + malonyl-CoA. Its pathway is lipid metabolism; malonyl-CoA biosynthesis; malonyl-CoA from acetyl-CoA: step 1/1. Functionally, component of the acetyl coenzyme A carboxylase (ACC) complex. First, biotin carboxylase catalyzes the carboxylation of biotin on its carrier protein (BCCP) and then the CO(2) group is transferred by the carboxyltransferase to acetyl-CoA to form malonyl-CoA. This chain is Acetyl-coenzyme A carboxylase carboxyl transferase subunit alpha, found in Blochmanniella floridana.